The following is a 470-amino-acid chain: Argininosuccinate lyase (470 aa).

It belongs to the lyase 1 family. Argininosuccinate lyase subfamily.

It localises to the cytoplasm. The catalysed reaction is 2-(N(omega)-L-arginino)succinate = fumarate + L-arginine. It participates in amino-acid biosynthesis; L-arginine biosynthesis; L-arginine from L-ornithine and carbamoyl phosphate: step 3/3. This chain is Argininosuccinate lyase, found in Mycobacterium sp. (strain JLS).